We begin with the raw amino-acid sequence, 81 residues long: Small ribosomal subunit protein bS18A (81 aa).

Belongs to the bacterial ribosomal protein bS18 family. As to quaternary structure, part of the 30S ribosomal subunit. Forms a tight heterodimer with protein bS6.

In terms of biological role, binds as a heterodimer with protein bS6 to the central domain of the 16S rRNA, where it helps stabilize the platform of the 30S subunit. In Saccharopolyspora erythraea (strain ATCC 11635 / DSM 40517 / JCM 4748 / NBRC 13426 / NCIMB 8594 / NRRL 2338), this protein is Small ribosomal subunit protein bS18A.